A 575-amino-acid chain; its full sequence is 2-isopropylmalate synthase (575 aa).

One can recognise a Pyruvate carboxyltransferase domain in the interval 31–305 (PTWLSTDLRD…APGLDFSDIA (275 aa)). The Mg(2+) site is built by Asp-40, His-244, His-246, and Asn-280. Residues 437-575 (PVQASPDFSD…RFAGEEQGKG (139 aa)) form a regulatory domain region.

It belongs to the alpha-IPM synthase/homocitrate synthase family. LeuA type 2 subfamily. Homodimer. Requires Mg(2+) as cofactor.

It is found in the cytoplasm. It catalyses the reaction 3-methyl-2-oxobutanoate + acetyl-CoA + H2O = (2S)-2-isopropylmalate + CoA + H(+). Its pathway is amino-acid biosynthesis; L-leucine biosynthesis; L-leucine from 3-methyl-2-oxobutanoate: step 1/4. In terms of biological role, catalyzes the condensation of the acetyl group of acetyl-CoA with 3-methyl-2-oxobutanoate (2-ketoisovalerate) to form 3-carboxy-3-hydroxy-4-methylpentanoate (2-isopropylmalate). This Herbaspirillum seropedicae (strain SmR1) protein is 2-isopropylmalate synthase.